A 246-amino-acid chain; its full sequence is UDP-N-acetyl-D-mannosaminuronic acid transferase (246 aa).

It belongs to the glycosyltransferase 26 family.

It carries out the reaction UDP-N-acetyl-alpha-D-mannosaminouronate + N-acetyl-alpha-D-glucosaminyl-di-trans,octa-cis-undecaprenyl diphosphate = beta-D-ManNAcA-(1-&gt;4)-alpha-D-GlcNAc-di-trans,octa-cis-undecaprenyl diphosphate + UDP + H(+). It participates in bacterial outer membrane biogenesis; enterobacterial common antigen biosynthesis. Its function is as follows. Catalyzes the synthesis of Und-PP-GlcNAc-ManNAcA (Lipid II), the second lipid-linked intermediate involved in enterobacterial common antigen (ECA) synthesis. This Yersinia pseudotuberculosis serotype IB (strain PB1/+) protein is UDP-N-acetyl-D-mannosaminuronic acid transferase.